Reading from the N-terminus, the 117-residue chain is UPF0122 protein Dred_2057 (117 aa).

It belongs to the UPF0122 family.

Its function is as follows. Might take part in the signal recognition particle (SRP) pathway. This is inferred from the conservation of its genetic proximity to ftsY/ffh. May be a regulatory protein. The sequence is that of UPF0122 protein Dred_2057 from Desulforamulus reducens (strain ATCC BAA-1160 / DSM 100696 / MI-1) (Desulfotomaculum reducens).